A 414-amino-acid polypeptide reads, in one-letter code: Stork-head box protein ham-1 (414 aa).

An essential for association with cell cortex region spans residues 1 to 31; it reads MTYLAVVLNGPKAKNGRKVFDSFLEQNRQMF. The 78-residue stretch at 93 to 170 folds into the Winged helix Storkhead-box1 domain; it reads QQVEQMHFVP…MADHYFVSVP (78 aa). The tract at residues 282 to 362 is disordered; the sequence is ECQRKARRRN…SNEEAGSISD (81 aa). Residues 285 to 295 are bi-partite nuclear localization signal; the sequence is RKARRRNHPRR. The segment at 321–327 is nuclear localization signal; it reads PTRRRAR. Positions 332–351 are enriched in polar residues; it reads LRSSTPNNSDSAYSISPPHT.

It localises to the cytoplasm. The protein localises to the cell cortex. It is found in the nucleus. Its function is as follows. Probable transcription factor. Required for asymmetric cell division in neuroblasts, perhaps acting by regulating spindle positioning and myosin polarization, and thus the position of the cleavage plane. Required to produce daughter cell size asymmetry in neuroblasts undergoing asymmetric cell division, usually giving rise to one precursor cell and one apoptotic cell. Positively modulates expression of the serine/threonine kinase pig-1/MELK during asymmetric division of the Q.a neuroblast. Plays a role in neural fate specification in several dopaminergic lineages, including the hermaphrodite-specific neuron (HSN)/phasmid neuron (PHB), acting in concert with the kinase, ham-1, and the T-box protein tbx-2 and the homeobox protein egl-5. This Caenorhabditis elegans protein is Stork-head box protein ham-1.